Here is a 375-residue protein sequence, read N- to C-terminus: Growth/differentiation factor 8 (375 aa).

The N-terminal stretch at 1–18 (MQKLQISVYIYLFMLIVA) is a signal peptide. A propeptide spanning residues 19 to 266 (GPVDLNENSE…VTDTPKRSRR (248 aa)) is cleaved from the precursor. Asn71 is a glycosylation site (N-linked (GlcNAc...) asparagine). Intrachain disulfides connect Cys272/Cys282, Cys281/Cys340, Cys309/Cys372, and Cys313/Cys374.

The protein belongs to the TGF-beta family. As to quaternary structure, homodimer; disulfide-linked. Interacts with WFIKKN2, leading to inhibit its activity. Interacts with FSTL3. Post-translationally, synthesized as large precursor molecule that undergoes proteolytic cleavage to generate an N-terminal propeptide and a disulfide linked C-terminal dimer, which is the biologically active molecule. The circulating form consists of a latent complex of the C-terminal dimer and other proteins, including its propeptide, which maintain the C-terminal dimer in a latent, inactive state. Ligand activation requires additional cleavage of the prodomain by a tolloid-like metalloproteinase.

The protein resides in the secreted. Functionally, acts specifically as a negative regulator of skeletal muscle growth. The chain is Growth/differentiation factor 8 (MSTN) from Lepus capensis (Brown hare).